A 461-amino-acid polypeptide reads, in one-letter code: Cysteine--tRNA ligase (461 aa).

Zn(2+) is bound at residue Cys28. The 'HIGH' region signature appears at 30 to 40 (ITVYDLCHIGH). Zn(2+) is bound by residues Cys209, His234, and Glu238. The short motif at 266-270 (KMSKS) is the 'KMSKS' region element. Lys269 is a binding site for ATP.

It belongs to the class-I aminoacyl-tRNA synthetase family. As to quaternary structure, monomer. Requires Zn(2+) as cofactor.

The protein localises to the cytoplasm. The enzyme catalyses tRNA(Cys) + L-cysteine + ATP = L-cysteinyl-tRNA(Cys) + AMP + diphosphate. The sequence is that of Cysteine--tRNA ligase from Escherichia coli O6:K15:H31 (strain 536 / UPEC).